We begin with the raw amino-acid sequence, 829 residues long: Periplasmic nitrate reductase (829 aa).

The tat-type signal signal peptide spans M1–A36. Residues L39 to D95 enclose the 4Fe-4S Mo/W bis-MGD-type domain. [4Fe-4S] cluster-binding residues include C46, C49, C53, and C81. Residues K83, Q150, N175, C179, W212–M219, S243–H247, Q262–D264, M373, Q377, N483, S509–D510, K532, D559, and T719–S728 contribute to the Mo-bis(molybdopterin guanine dinucleotide) site. W795 provides a ligand contact to substrate. Residues N803 and K820 each contribute to the Mo-bis(molybdopterin guanine dinucleotide) site.

Belongs to the prokaryotic molybdopterin-containing oxidoreductase family. NasA/NapA/NarB subfamily. Component of the periplasmic nitrate reductase NapAB complex composed of NapA and NapB. [4Fe-4S] cluster serves as cofactor. Requires Mo-bis(molybdopterin guanine dinucleotide) as cofactor. In terms of processing, predicted to be exported by the Tat system. The position of the signal peptide cleavage has not been experimentally proven.

It is found in the periplasm. It carries out the reaction 2 Fe(II)-[cytochrome] + nitrate + 2 H(+) = 2 Fe(III)-[cytochrome] + nitrite + H2O. Catalytic subunit of the periplasmic nitrate reductase complex NapAB. Receives electrons from NapB and catalyzes the reduction of nitrate to nitrite. This chain is Periplasmic nitrate reductase, found in Bordetella bronchiseptica (strain ATCC BAA-588 / NCTC 13252 / RB50) (Alcaligenes bronchisepticus).